Reading from the N-terminus, the 108-residue chain is Heme-degrading monooxygenase HmoA (108 aa).

The ABM domain occupies Phe-2 to Met-95. Heme is bound at residue His-76.

This sequence belongs to the antibiotic biosynthesis monooxygenase family. As to quaternary structure, homodimer.

The protein resides in the cytoplasm. It carries out the reaction heme b + 3 reduced [NADPH--hemoprotein reductase] + 3 O2 = biliverdin IXalpha + CO + Fe(2+) + 3 oxidized [NADPH--hemoprotein reductase] + 3 H2O + H(+). Its function is as follows. Allows bacterial pathogens to use the host heme as an iron source. Catalyzes the oxidative degradation of the heme macrocyclic porphyrin ring in the presence of a suitable electron donor such as ascorbate or NADPH--cytochrome P450 reductase, with subsequent release of free iron. The chain is Heme-degrading monooxygenase HmoA (hmoA) from Bacillus subtilis (strain 168).